We begin with the raw amino-acid sequence, 449 residues long: tRNA-2-methylthio-N(6)-dimethylallyladenosine synthase (449 aa).

Residues 3 to 124 (KMLYIKTYGC…LPTMLEKLDS (122 aa)) form the MTTase N-terminal domain. Cysteine 12, cysteine 48, cysteine 87, cysteine 163, cysteine 167, and cysteine 170 together coordinate [4Fe-4S] cluster. Positions 149 to 380 (KSPTVSGLVS…QAQLMQQQLE (232 aa)) constitute a Radical SAM core domain. The TRAM domain maps to 383–447 (QKLIGKVVPV…ASSLFGEVYA (65 aa)).

Belongs to the methylthiotransferase family. MiaB subfamily. Monomer. Requires [4Fe-4S] cluster as cofactor.

The protein resides in the cytoplasm. The catalysed reaction is N(6)-dimethylallyladenosine(37) in tRNA + (sulfur carrier)-SH + AH2 + 2 S-adenosyl-L-methionine = 2-methylsulfanyl-N(6)-dimethylallyladenosine(37) in tRNA + (sulfur carrier)-H + 5'-deoxyadenosine + L-methionine + A + S-adenosyl-L-homocysteine + 2 H(+). Its function is as follows. Catalyzes the methylthiolation of N6-(dimethylallyl)adenosine (i(6)A), leading to the formation of 2-methylthio-N6-(dimethylallyl)adenosine (ms(2)i(6)A) at position 37 in tRNAs that read codons beginning with uridine. This chain is tRNA-2-methylthio-N(6)-dimethylallyladenosine synthase, found in Orientia tsutsugamushi (strain Ikeda) (Rickettsia tsutsugamushi).